A 603-amino-acid chain; its full sequence is NADH-ubiquinone oxidoreductase chain 5 (603 aa).

A run of 16 helical transmembrane segments spans residues 4–24 (YTTM…TTLI), 38–58 (SIIA…MCLD), 87–107 (MTFI…SLWY), 122–142 (LIFL…QLFI), 144–160 (WEGV…WWYA), 171–191 (AILY…WFLL), 211–233 (TPLL…HPWL), 241–261 (TPVS…FLLI), 272–292 (LIQT…AICA), 301–320 (IVAF…IGIN), 325–347 (AFLH…GSII), 370–390 (STSL…TGFY), 407–429 (WALS…MILL), 457–477 (LTIG…PMST), 482–502 (IPLY…LTAL), and 583–603 (MIKL…LLIM).

Belongs to the complex I subunit 5 family. As to quaternary structure, core subunit of respiratory chain NADH dehydrogenase (Complex I) which is composed of 45 different subunits.

It localises to the mitochondrion inner membrane. It carries out the reaction a ubiquinone + NADH + 5 H(+)(in) = a ubiquinol + NAD(+) + 4 H(+)(out). Core subunit of the mitochondrial membrane respiratory chain NADH dehydrogenase (Complex I) which catalyzes electron transfer from NADH through the respiratory chain, using ubiquinone as an electron acceptor. Essential for the catalytic activity and assembly of complex I. The chain is NADH-ubiquinone oxidoreductase chain 5 (MT-ND5) from Pan paniscus (Pygmy chimpanzee).